A 362-amino-acid polypeptide reads, in one-letter code: Phosphoserine aminotransferase (362 aa).

Residues Ser-9 and Arg-42 each coordinate L-glutamate. Residues 76 to 77, Trp-102, Thr-153, Asp-174, and Gln-197 each bind pyridoxal 5'-phosphate; that span reads GR. Lys-198 is subject to N6-(pyridoxal phosphate)lysine. 239–240 serves as a coordination point for pyridoxal 5'-phosphate; that stretch reads NT.

The protein belongs to the class-V pyridoxal-phosphate-dependent aminotransferase family. SerC subfamily. Homodimer. Pyridoxal 5'-phosphate serves as cofactor.

It localises to the cytoplasm. It catalyses the reaction O-phospho-L-serine + 2-oxoglutarate = 3-phosphooxypyruvate + L-glutamate. The catalysed reaction is 4-(phosphooxy)-L-threonine + 2-oxoglutarate = (R)-3-hydroxy-2-oxo-4-phosphooxybutanoate + L-glutamate. The protein operates within amino-acid biosynthesis; L-serine biosynthesis; L-serine from 3-phospho-D-glycerate: step 2/3. It participates in cofactor biosynthesis; pyridoxine 5'-phosphate biosynthesis; pyridoxine 5'-phosphate from D-erythrose 4-phosphate: step 3/5. In terms of biological role, catalyzes the reversible conversion of 3-phosphohydroxypyruvate to phosphoserine and of 3-hydroxy-2-oxo-4-phosphonooxybutanoate to phosphohydroxythreonine. The protein is Phosphoserine aminotransferase of Salmonella choleraesuis (strain SC-B67).